Here is a 508-residue protein sequence, read N- to C-terminus: Light-independent protochlorophyllide reductase subunit B (508 aa).

Asp-36 is a binding site for [4Fe-4S] cluster. The active-site Proton donor is Asp-294. 429–430 (GM) serves as a coordination point for substrate.

Belongs to the ChlB/BchB/BchZ family. As to quaternary structure, protochlorophyllide reductase is composed of three subunits; ChlL, ChlN and ChlB. Forms a heterotetramer of two ChlB and two ChlN subunits. The cofactor is [4Fe-4S] cluster.

The enzyme catalyses chlorophyllide a + oxidized 2[4Fe-4S]-[ferredoxin] + 2 ADP + 2 phosphate = protochlorophyllide a + reduced 2[4Fe-4S]-[ferredoxin] + 2 ATP + 2 H2O. It functions in the pathway porphyrin-containing compound metabolism; chlorophyll biosynthesis (light-independent). Functionally, component of the dark-operative protochlorophyllide reductase (DPOR) that uses Mg-ATP and reduced ferredoxin to reduce ring D of protochlorophyllide (Pchlide) to form chlorophyllide a (Chlide). This reaction is light-independent. The NB-protein (ChlN-ChlB) is the catalytic component of the complex. In Synechocystis sp. (strain ATCC 27184 / PCC 6803 / Kazusa), this protein is Light-independent protochlorophyllide reductase subunit B.